A 795-amino-acid chain; its full sequence is Outer membrane protein assembly factor BamA (795 aa).

A signal peptide spans 1–19 (MKKLLIASLLFGTTTTVFA). POTRA domains lie at 22 to 89 (FVAK…VVAK), 90 to 170 (SIIS…INED), 173 to 259 (AKLA…VNEG), 262 to 341 (YDLR…VDAG), and 344 to 418 (LTVR…VKER).

This sequence belongs to the BamA family. As to quaternary structure, part of the Bam complex.

It localises to the cell outer membrane. Part of the outer membrane protein assembly complex, which is involved in assembly and insertion of beta-barrel proteins into the outer membrane. The chain is Outer membrane protein assembly factor BamA from Haemophilus influenzae (strain ATCC 51907 / DSM 11121 / KW20 / Rd).